The primary structure comprises 341 residues: MNTATQAPKDSADSATERFRYGFLKGNPQLTKNGELKHLLSIEGLPKAIVNHILDTADQFVSVTDREVKKVPLLRGKSVFNLFFENSTRTRTTFEIAATRLSADVLNLNINASSTSKGESLLDTINNLSAMHADMFVVRHASSGAPYLIAQHCAPHVHVINAGDGRHAHPTQGLLDMYTIRHYKKDFTKLRVAIVGDILHSRVARSDIHALTTLGVPEVRAIGPRTLLPGGLEQMGVRVFHNLDEGLKDVDVIIMLRLQNERMSGALLPSAQEYFKSWGLTPERLALAAPDAIVMHPGPMNRGVEIDSQVADGPQSVILNQVTFGIAVRMAVMGIVAGNHD.

2 residues coordinate carbamoyl phosphate: Arg-89 and Thr-90. Lys-117 contacts L-aspartate. Residues Arg-139, His-169, and Gln-172 each coordinate carbamoyl phosphate. Arg-202 and Arg-257 together coordinate L-aspartate. Carbamoyl phosphate contacts are provided by Gly-298 and Pro-299.

Belongs to the aspartate/ornithine carbamoyltransferase superfamily. ATCase family. As to quaternary structure, heterododecamer (2C3:3R2) of six catalytic PyrB chains organized as two trimers (C3), and six regulatory PyrI chains organized as three dimers (R2).

The catalysed reaction is carbamoyl phosphate + L-aspartate = N-carbamoyl-L-aspartate + phosphate + H(+). The protein operates within pyrimidine metabolism; UMP biosynthesis via de novo pathway; (S)-dihydroorotate from bicarbonate: step 2/3. Catalyzes the condensation of carbamoyl phosphate and aspartate to form carbamoyl aspartate and inorganic phosphate, the committed step in the de novo pyrimidine nucleotide biosynthesis pathway. This Paraburkholderia phytofirmans (strain DSM 17436 / LMG 22146 / PsJN) (Burkholderia phytofirmans) protein is Aspartate carbamoyltransferase catalytic subunit.